A 98-amino-acid polypeptide reads, in one-letter code: Integration host factor subunit alpha (98 aa).

Residues Phe49–Asp70 are disordered.

It belongs to the bacterial histone-like protein family. Heterodimer of an alpha and a beta chain.

In terms of biological role, this protein is one of the two subunits of integration host factor, a specific DNA-binding protein that functions in genetic recombination as well as in transcriptional and translational control. This Shewanella baltica (strain OS223) protein is Integration host factor subunit alpha.